Here is a 372-residue protein sequence, read N- to C-terminus: Chorismate synthase (372 aa).

Arg-48 serves as a coordination point for NADP(+). FMN is bound by residues 125-127 (RSS), Gly-285, 300-304 (KPTPS), and Arg-327.

It belongs to the chorismate synthase family. Requires FMNH2 as cofactor.

It catalyses the reaction 5-O-(1-carboxyvinyl)-3-phosphoshikimate = chorismate + phosphate. The protein operates within metabolic intermediate biosynthesis; chorismate biosynthesis; chorismate from D-erythrose 4-phosphate and phosphoenolpyruvate: step 7/7. Functionally, catalyzes the anti-1,4-elimination of the C-3 phosphate and the C-6 proR hydrogen from 5-enolpyruvylshikimate-3-phosphate (EPSP) to yield chorismate, which is the branch point compound that serves as the starting substrate for the three terminal pathways of aromatic amino acid biosynthesis. This reaction introduces a second double bond into the aromatic ring system. This chain is Chorismate synthase, found in Methanocella arvoryzae (strain DSM 22066 / NBRC 105507 / MRE50).